The primary structure comprises 334 residues: MIKRTLTVSLLSLSLGAMFASAGVMAANEPIQPIKAVTPENADMAELGKMLFFDPRLSKSGFISCNSCHNLSMGGTDNITTSIGHKWQQGPINAPTVLNSSMNLAQFWDGRAKDLKEQAAGPIANPKEMASTHEIAEKVVASMPQYRERFKKVFGSDEVTIDRITTAIAQFEETLVTPGSKFDKWLEGDKNALNQDELEGYNLFKGSGCVQCHNGPAVGGSSYQKMGVFKPYETKNPAAGRMDVTGNEADRNVFKVPTLRNIELTYPYFHDGGAATLEQAVETMGRIQLNREFNKDEVSKIVAFLKTLTGDQPDFKLPILPPSNNDTPRSQPYE.

Positions 1–26 (MIKRTLTVSLLSLSLGAMFASAGVMA) are cleaved as a signal peptide. The heme c site is built by Cys65, Cys68, His69, Cys209, Cys212, His213, His270, and Met284. Positions 315 to 334 (FKLPILPPSNNDTPRSQPYE) are disordered. Residues 322–334 (PSNNDTPRSQPYE) show a composition bias toward polar residues.

Post-translationally, binds 2 heme c groups covalently per subunit.

It localises to the periplasm. The enzyme catalyses 2 Fe(II)-[cytochrome c] + H2O2 + 2 H(+) = 2 Fe(III)-[cytochrome c] + 2 H2O. The polypeptide is Cytochrome c551 peroxidase (ccp) (Nitrosomonas europaea (strain ATCC 19718 / CIP 103999 / KCTC 2705 / NBRC 14298)).